Here is a 729-residue protein sequence, read N- to C-terminus: E3 ubiquitin-protein ligase Trim36 (729 aa).

Residues 33–84 (CPACKELFTHPLILPCQHSVCHKCVKELLLSLDDSFNDVASDSSNQSSPRLR) form an RING-type; degenerate zinc finger. 2 consecutive B box-type zinc fingers follow at residues 154-192 (AIMC…WGTV) and 207-249 (PKVL…VTTM). Cys212, His215, Cys235, and His241 together coordinate Zn(2+). A coiled-coil region spans residues 271-302 (ESQVKSQISELNLLMKETECNGERAKEEALAH). Positions 356–413 (LKETDQSCFVQTAKQLHLRIQKATESLKSFRPAAQASFEDYVVNISKQTEVLGELSFF) constitute a COS domain. Residues 416–511 (GIDIPEINEE…RELILHTPPA (96 aa)) form the Fibronectin type-III domain. The B30.2/SPRY domain maps to 509 to 723 (PPAPVFSFLF…LEEAITAKYL (215 aa)). Residues 606 to 626 (RDAASPRYEQDSGHDSGSEDA) are disordered. Basic and acidic residues predominate over residues 613–622 (YEQDSGHDSG).

Belongs to the TRIM/RBCC family. Interacts with CENPH. Expressed in testis. Strongly expressed in the neural tube region in 14.5 dpc embryos.

Its subcellular location is the cytoplasm. It localises to the cytoplasmic vesicle. It is found in the secretory vesicle. The protein localises to the acrosome. The protein resides in the cytoskeleton. The catalysed reaction is S-ubiquitinyl-[E2 ubiquitin-conjugating enzyme]-L-cysteine + [acceptor protein]-L-lysine = [E2 ubiquitin-conjugating enzyme]-L-cysteine + N(6)-ubiquitinyl-[acceptor protein]-L-lysine.. Functionally, E3 ubiquitin-protein ligase which mediates ubiquitination and subsequent proteasomal degradation of target proteins. Involved in chromosome segregation and cell cycle regulation. May play a role in the acrosome reaction and fertilization. This is E3 ubiquitin-protein ligase Trim36 (Trim36) from Mus musculus (Mouse).